Reading from the N-terminus, the 1453-residue chain is NK-tumor recognition protein (1453 aa).

The PPIase cyclophilin-type domain maps to 10-175 (HFDIEINREP…ADVRVIDCGV (166 aa)). The disordered stretch occupies residues 187–625 (KKRKKPTCSE…RWKPGQKPWK (439 aa)). The segment covering 195 to 213 (SEGSDSSSRSSSSSESSSE) has biased composition (low complexity). Residues 221 to 240 (IRRRRHKRRPKVRHAKKRRK) are compositionally biased toward basic residues. Positions 259-286 (YSERSDVNEKRSVDSNTKREKPVVRPEE) are enriched in basic and acidic residues. A Glycyl lysine isopeptide (Lys-Gly) (interchain with G-Cter in SUMO2) cross-link involves residue Lys323. Positions 329 to 348 (SGRKIKGRGTIRYHTPPRSR) are enriched in basic residues. 3 positions are modified to phosphoserine: Ser379, Ser401, and Ser416. Over residues 382 to 402 (KWSKGDKLSDPCSSRWDERSL) the composition is skewed to basic and acidic residues. Residues 403–421 (SQRSRSWSYNGYYSDLSTA) are compositionally biased toward polar residues. The segment covering 425–460 (DGHHKKHRKEKKFKHKKKAKKQKHCRRHRQTKKRRI) has biased composition (basic residues). Positions 514 to 531 (SSRDSYRSKSHSRSDSRG) are enriched in basic and acidic residues. Composition is skewed to low complexity over residues 532-546 (SSRS…SRSL) and 554-565 (SSRSGPRRTSIS). Residues Lys576 and Lys579 each participate in a glycyl lysine isopeptide (Lys-Gly) (interchain with G-Cter in SUMO2) cross-link. A Phosphoserine modification is found at Ser611. A Glycyl lysine isopeptide (Lys-Gly) (interchain with G-Cter in SUMO2) cross-link involves residue Lys637. Phosphoserine is present on Ser646. Positions 651-661 (TNIKATVSSSS) are enriched in polar residues. The segment at 651-1453 (TNIKATVSSS…RSPSESSRYS (803 aa)) is disordered. Residues Lys654 and Lys664 each participate in a glycyl lysine isopeptide (Lys-Gly) (interchain with G-Cter in SUMO2) cross-link. Low complexity-rich tracts occupy residues 682–726 (RSSG…SSRS) and 736–749 (SQHS…SVSS). Over residues 755–772 (AMFRSNRKKSVTSHKRHR) the composition is skewed to basic residues. Positions 773–789 (SNSEKTLHSKYVRGREK) are enriched in basic and acidic residues. Low complexity predominate over residues 799-809 (SRSSLDYSSDS). 2 stretches are compositionally biased toward basic and acidic residues: residues 820-852 (PEKE…ECPR) and 859-868 (KDHSRDDSVS). Phosphoserine is present on residues Ser880, Ser882, Ser884, and Ser900. The segment covering 887-902 (DVTKSRKSDPRRGSEK) has biased composition (basic and acidic residues). The span at 903 to 913 (EEGEASSDSES) shows a compositional bias: acidic residues. Residues 948-958 (SSASESESSCS) show a composition bias toward low complexity. The segment covering 966-982 (EPQKQKHSKDDLKGDHT) has biased composition (basic and acidic residues). A compositionally biased stretch (basic residues) spans 983-1005 (KRAREKSKAKKDKKHKAPKRKQA). A compositionally biased stretch (basic and acidic residues) spans 1030–1045 (DPKEKRHVSEKCEAVK). 2 positions are modified to phosphoserine: Ser1139 and Ser1148. Residues 1170-1180 (QESSMSESKTL) are compositionally biased toward polar residues. Low complexity predominate over residues 1189–1199 (SSTSVTSPVET). A Phosphoserine modification is found at Ser1195. Residues Lys1208 and Lys1249 each participate in a glycyl lysine isopeptide (Lys-Gly) (interchain with G-Cter in SUMO2) cross-link. The tract at residues 1303–1453 (RSPHRSRSKS…RSPSESSRYS (151 aa)) is arg/Ser tandem repeat-rich. Low complexity predominate over residues 1322–1346 (SVSYSHSRSRSRSSTSSYRSRSYSR). Residues 1369 to 1379 (HSHRTSSRSRS) show a composition bias toward basic residues. Residues 1380–1401 (RSSSYDLHSRSRSYTYDSYYSR) show a composition bias toward low complexity. Over residues 1416-1426 (RGRSYNRRSRS) the composition is skewed to basic residues.

The protein resides in the cell membrane. The enzyme catalyses [protein]-peptidylproline (omega=180) = [protein]-peptidylproline (omega=0). With respect to regulation, inhibited by cyclosporin A (CsA). PPIase that catalyzes the cis-trans isomerization of proline imidic peptide bonds in oligopeptides and may therefore assist protein folding. Component of a putative tumor-recognition complex involved in the function of NK cells. The protein is NK-tumor recognition protein of Mus musculus (Mouse).